The primary structure comprises 551 residues: Probable CoA ligase CCL5 (551 aa).

Residues 204–212 (SSGTTGASK), 345–350 (QGYGLT), aspartate 431, 443–446 (VVDR), and lysine 537 contribute to the ATP site. Residues 274 to 345 (EIHEMLSAIE…ENYPTVSILQ (72 aa)) form an SBD1 region. The interval 346–410 (GYGLTESTGI…LRGPTIMKGY (65 aa)) is SBD2.

This sequence belongs to the ATP-dependent AMP-binding enzyme family. Mostly expressed at low levels in glandular trichomes (lupulin glands) after flowering, and, to a lower extent, in stems, leaves, cones and flowers.

It localises to the cytoplasm. Its subcellular location is the cytosol. The protein is Probable CoA ligase CCL5 of Humulus lupulus (European hop).